Reading from the N-terminus, the 250-residue chain is 5-oxoprolinase subunit A (250 aa).

The protein belongs to the LamB/PxpA family. As to quaternary structure, forms a complex composed of PxpA, PxpB and PxpC.

The enzyme catalyses 5-oxo-L-proline + ATP + 2 H2O = L-glutamate + ADP + phosphate + H(+). In terms of biological role, catalyzes the cleavage of 5-oxoproline to form L-glutamate coupled to the hydrolysis of ATP to ADP and inorganic phosphate. In Chromohalobacter salexigens (strain ATCC BAA-138 / DSM 3043 / CIP 106854 / NCIMB 13768 / 1H11), this protein is 5-oxoprolinase subunit A.